We begin with the raw amino-acid sequence, 278 residues long: ATP synthase subunit a (278 aa).

The next 6 helical transmembrane spans lie at 41–61 (FLNI…LLFF), 108–128 (LTIF…VDFV), 149–168 (INIT…YFGI), 180–200 (FFFQ…LELI), 222–242 (LIFI…LSVP), and 244–264 (AIFH…LTII).

It belongs to the ATPase A chain family. F-type ATPases have 2 components, CF(1) - the catalytic core - and CF(0) - the membrane proton channel. CF(1) has five subunits: alpha(3), beta(3), gamma(1), delta(1), epsilon(1). CF(0) has three main subunits: a(1), b(2) and c(9-12). The alpha and beta chains form an alternating ring which encloses part of the gamma chain. CF(1) is attached to CF(0) by a central stalk formed by the gamma and epsilon chains, while a peripheral stalk is formed by the delta and b chains.

It localises to the cell membrane. In terms of biological role, key component of the proton channel; it plays a direct role in the translocation of protons across the membrane. In Wigglesworthia glossinidia brevipalpis, this protein is ATP synthase subunit a.